The sequence spans 216 residues: MSLPMLQVALDNQTMDSAYETTRLIAEEVDIIEVGTILCVGEGVRAVRDLKALYPHKIVLADAKIADAGKILSRMCFEANADWVTVICCADINTAKGALDVAKEFNGDVQIELTGYWTWEQAQQWRDAGIGQVVYHRSRDAQAAGVAWGGADITAIKRLSDMGFKVTVTGGLALEDLPLFKGIPIHVFIAGRSIRDAASPVEAARQFKRSIAELWG.

Asp-11 contributes to the substrate binding site. Mg(2+) contacts are provided by Glu-33 and Asp-62. Position 192 (Arg-192) interacts with substrate.

Belongs to the HPS/KGPDC family. KGPDC subfamily. In terms of assembly, homodimer. The cofactor is Mg(2+).

The enzyme catalyses 3-dehydro-L-gulonate 6-phosphate + H(+) = L-xylulose 5-phosphate + CO2. It participates in cofactor degradation; L-ascorbate degradation; D-xylulose 5-phosphate from L-ascorbate: step 2/4. Its function is as follows. Catalyzes the decarboxylation of 3-keto-L-gulonate-6-P into L-xylulose-5-P. Is involved in the anaerobic L-ascorbate utilization. This Shigella dysenteriae serotype 1 (strain Sd197) protein is 3-keto-L-gulonate-6-phosphate decarboxylase UlaD.